A 287-amino-acid chain; its full sequence is Lipoyl synthase (287 aa).

[4Fe-4S] cluster-binding residues include cysteine 34, cysteine 39, cysteine 45, cysteine 60, cysteine 64, cysteine 67, and serine 273. The Radical SAM core domain maps to 46 to 262; that stretch reads WNKRHATVMI…KYIAYSKGFL (217 aa).

The protein belongs to the radical SAM superfamily. Lipoyl synthase family. Requires [4Fe-4S] cluster as cofactor.

Its subcellular location is the cytoplasm. It carries out the reaction [[Fe-S] cluster scaffold protein carrying a second [4Fe-4S](2+) cluster] + N(6)-octanoyl-L-lysyl-[protein] + 2 oxidized [2Fe-2S]-[ferredoxin] + 2 S-adenosyl-L-methionine + 4 H(+) = [[Fe-S] cluster scaffold protein] + N(6)-[(R)-dihydrolipoyl]-L-lysyl-[protein] + 4 Fe(3+) + 2 hydrogen sulfide + 2 5'-deoxyadenosine + 2 L-methionine + 2 reduced [2Fe-2S]-[ferredoxin]. It functions in the pathway protein modification; protein lipoylation via endogenous pathway; protein N(6)-(lipoyl)lysine from octanoyl-[acyl-carrier-protein]: step 2/2. Functionally, catalyzes the radical-mediated insertion of two sulfur atoms into the C-6 and C-8 positions of the octanoyl moiety bound to the lipoyl domains of lipoate-dependent enzymes, thereby converting the octanoylated domains into lipoylated derivatives. In Wolbachia sp. subsp. Brugia malayi (strain TRS), this protein is Lipoyl synthase.